A 221-amino-acid chain; its full sequence is Charged multivesicular body protein 3 (221 aa).

Glycine 2 carries N-myristoyl glycine lipidation. Positions 22-54 (KIRKEMRVIDRQIRDIQREEEKVKRSIKDAAKK) form a coiled coil. 2 important for autoinhibitory function regions span residues 59–64 (VCIILA) and 168–169 (IL). Residues 144–221 (LEDTLEGMDD…MQSRLAALRS (78 aa)) adopt a coiled-coil conformation. Residues 181-221 (PSKVTDLPDPVAIGATAAPEEESEEEEEIEEMQSRLAALRS) form a disordered region. The span at 199 to 211 (PEEESEEEEEIEE) shows a compositional bias: acidic residues. The MIT-interacting motif motif lies at 200-210 (EEESEEEEEIE). Interaction with STAMBP stretches follow at residues 202–206 (ESEEE) and 220–221 (RS).

The protein belongs to the SNF7 family. As to quaternary structure, probable core component of the endosomal sorting required for transport complex III (ESCRT-III). ESCRT-III components are thought to multimerize to form a flat lattice on the perimeter membrane of the endosome. Several assembly forms of ESCRT-III may exist that interact and act sequentially.

It is found in the cytoplasm. Its subcellular location is the cytosol. The protein resides in the membrane. It localises to the endosome. The protein localises to the late endosome membrane. Its function is as follows. Probable core component of the endosomal sorting required for transport complex III (ESCRT-III) which is involved in multivesicular bodies (MVBs) formation and sorting of endosomal cargo proteins into MVBs. MVBs contain intraluminal vesicles (ILVs) that are generated by invagination and scission from the limiting membrane of the endosome and mostly are delivered to lysosomes enabling degradation of membrane proteins, such as stimulated growth factor receptors, lysosomal enzymes and lipids. Involved in late stages of cytokinesis. Plays a role in endosomal sorting/trafficking of EGF receptor. This is Charged multivesicular body protein 3 (chmp3) from Danio rerio (Zebrafish).